A 436-amino-acid chain; its full sequence is Chromosomal replication initiator protein DnaA (436 aa).

Positions 1-80 are domain I, interacts with DnaA modulators; it reads MSHEAVWQHV…QAPRFELRVV (80 aa). A domain II region spans residues 80 to 100; that stretch reads VPGVVVQEDIFQAAPAEAPRP. Residues 101–317 form a domain III, AAA+ region region; that stretch reads KLNPKYTFEN…GALMRAIAFA (217 aa). ATP-binding residues include G145, G147, K148, and T149. The domain IV, binds dsDNA stretch occupies residues 318-436; that stretch reads SLNGVELTRA…LLRTLREACT (119 aa).

Belongs to the DnaA family. As to quaternary structure, oligomerizes as a right-handed, spiral filament on DNA at oriC.

It localises to the cytoplasm. It catalyses the reaction ATP + H2O = ADP + phosphate + H(+). Plays an essential role in the initiation and regulation of chromosomal replication. ATP-DnaA binds to the origin of replication (oriC) to initiate formation of the DNA replication initiation complex once per cell cycle. Binds the DnaA box (a 9 base pair repeat at the origin) and separates the double-stranded (ds)DNA. Forms a right-handed helical filament on oriC DNA; dsDNA binds to the exterior of the filament while single-stranded (ss)DNA is stabiized in the filament's interior. The ATP-DnaA-oriC complex binds and stabilizes one strand of the AT-rich DNA unwinding element (DUE), permitting loading of DNA polymerase. After initiation quickly degrades to an ADP-DnaA complex that is not apt for DNA replication. Binds acidic phospholipids. In terms of biological role, the DnaA box consensus is 5'-TTATC[CA]A[CA]A-3' in this bacterium; oriC consists of 13 clustered DnaA boxes and a 40 base pair AT-rich region. ATP-DnaA binds cooperatively to multiple DnaA boxes, while ADP-DnaA binds with low cooperativity to the individual DnaA boxes. About 16-18 DnaA protein molecules bind their sites in oriC. Has a slow ATPase activity. Binds linear and supercoiled DNA. This chain is Chromosomal replication initiator protein DnaA, found in Thermus thermophilus (strain ATCC 27634 / DSM 579 / HB8).